Here is a 235-residue protein sequence, read N- to C-terminus: Ubiquinone/menaquinone biosynthesis C-methyltransferase UbiE (235 aa).

Residues Thr-59, Asp-84, and Ser-123 each contribute to the S-adenosyl-L-methionine site.

Belongs to the class I-like SAM-binding methyltransferase superfamily. MenG/UbiE family.

It catalyses the reaction a 2-demethylmenaquinol + S-adenosyl-L-methionine = a menaquinol + S-adenosyl-L-homocysteine + H(+). It carries out the reaction a 2-methoxy-6-(all-trans-polyprenyl)benzene-1,4-diol + S-adenosyl-L-methionine = a 5-methoxy-2-methyl-3-(all-trans-polyprenyl)benzene-1,4-diol + S-adenosyl-L-homocysteine + H(+). It participates in quinol/quinone metabolism; menaquinone biosynthesis; menaquinol from 1,4-dihydroxy-2-naphthoate: step 2/2. It functions in the pathway cofactor biosynthesis; ubiquinone biosynthesis. In terms of biological role, methyltransferase required for the conversion of demethylmenaquinol (DMKH2) to menaquinol (MKH2) and the conversion of 2-polyprenyl-6-methoxy-1,4-benzoquinol (DDMQH2) to 2-polyprenyl-3-methyl-6-methoxy-1,4-benzoquinol (DMQH2). The sequence is that of Ubiquinone/menaquinone biosynthesis C-methyltransferase UbiE from Campylobacter jejuni subsp. jejuni serotype O:6 (strain 81116 / NCTC 11828).